A 127-amino-acid polypeptide reads, in one-letter code: Fluoride-specific ion channel FluC (127 aa).

4 helical membrane passes run 3–23 (LVFL…YFVG), 38–58 (LGTF…GHLA), 67–87 (FGIF…SYGL), and 102–122 (ISYV…GWFL). Na(+)-binding residues include G77 and T80.

Belongs to the fluoride channel Fluc/FEX (TC 1.A.43) family.

Its subcellular location is the cell inner membrane. The enzyme catalyses fluoride(in) = fluoride(out). Na(+) is not transported, but it plays an essential structural role and its presence is essential for fluoride channel function. Functionally, fluoride-specific ion channel. Important for reducing fluoride concentration in the cell, thus reducing its toxicity. The polypeptide is Fluoride-specific ion channel FluC (Helicobacter acinonychis (strain Sheeba)).